A 159-amino-acid polypeptide reads, in one-letter code: Small ribosomal subunit protein uS9 (159 aa).

This sequence belongs to the universal ribosomal protein uS9 family.

The chain is Small ribosomal subunit protein uS9 from Rickettsia rickettsii (strain Iowa).